The primary structure comprises 489 residues: Mitochondrial-processing peptidase subunit beta (489 aa).

The transit peptide at 1–45 (MAAAAVSRTLLPVAGRRLWGFTRRLPLRAAAAQPLYFGGDRLRST) directs the protein to the mitochondrion. Histidine 101 is a Zn(2+) binding site. Glutamate 104 serves as the catalytic Proton acceptor. Positions 105 and 181 each coordinate Zn(2+).

The protein belongs to the peptidase M16 family. As to quaternary structure, heterodimer of PMPCA (alpha) and PMPCB (beta) subunits, forming the mitochondrial processing protease (MPP) in which PMPCA is involved in substrate recognition and binding and PMPCB is the catalytic subunit. The cofactor is Zn(2+).

It localises to the mitochondrion matrix. The catalysed reaction is Release of N-terminal transit peptides from precursor proteins imported into the mitochondrion, typically with Arg in position P2.. Binding to PMPCA is required for catalytic activity. In terms of biological role, catalytic subunit of the essential mitochondrial processing protease (MPP), which cleaves the mitochondrial sequence off newly imported precursors proteins. Preferentially, cleaves after an arginine at position P2. Required for PINK1 turnover by coupling PINK1 mitochondrial import and cleavage, which results in subsequent PINK1 proteolysis. This Rattus norvegicus (Rat) protein is Mitochondrial-processing peptidase subunit beta (Pmpcb).